A 616-amino-acid chain; its full sequence is Homeodomain-interacting protein kinase 4 (616 aa).

Residues 11–347 (YDIIEVLGKG…PSAALRHPFV (337 aa)) form the Protein kinase domain. ATP-binding positions include 17-25 (LGKGTFGEV) and Lys-40. The active-site Proton acceptor is the Asp-136. A disordered region spans residues 485–616 (RHKARKPPAG…SFLQHVTGHH (132 aa)). Over residues 496–511 (KSDSNLSNLIRLSQVS) the composition is skewed to polar residues. The residue at position 511 (Ser-511) is a Phosphoserine.

The protein belongs to the protein kinase superfamily. CMGC Ser/Thr protein kinase family. HIPK subfamily. In terms of processing, autophosphorylated.

The protein resides in the cytoplasm. The enzyme catalyses L-seryl-[protein] + ATP = O-phospho-L-seryl-[protein] + ADP + H(+). It carries out the reaction L-threonyl-[protein] + ATP = O-phospho-L-threonyl-[protein] + ADP + H(+). Protein kinase that phosphorylates TP53, and thus induces TP53 repression of BIRC5 promoter. May act as a corepressor of transcription factors (Potential). The polypeptide is Homeodomain-interacting protein kinase 4 (HIPK4) (Macaca fascicularis (Crab-eating macaque)).